The sequence spans 158 residues: Regulator of sigma D (158 aa).

It belongs to the Rsd/AlgQ family. Interacts with RpoD.

The protein localises to the cytoplasm. Functionally, binds RpoD and negatively regulates RpoD-mediated transcription activation by preventing the interaction between the primary sigma factor RpoD with the catalytic core of the RNA polymerase and with promoter DNA. May be involved in replacement of the RNA polymerase sigma subunit from RpoD to RpoS during the transition from exponential growth to the stationary phase. This chain is Regulator of sigma D, found in Escherichia fergusonii (strain ATCC 35469 / DSM 13698 / CCUG 18766 / IAM 14443 / JCM 21226 / LMG 7866 / NBRC 102419 / NCTC 12128 / CDC 0568-73).